The following is a 122-amino-acid chain: Large ribosomal subunit protein uL18 (122 aa).

Belongs to the universal ribosomal protein uL18 family. As to quaternary structure, part of the 50S ribosomal subunit; part of the 5S rRNA/L5/L18/L25 subcomplex. Contacts the 5S and 23S rRNAs.

Its function is as follows. This is one of the proteins that bind and probably mediate the attachment of the 5S RNA into the large ribosomal subunit, where it forms part of the central protuberance. The chain is Large ribosomal subunit protein uL18 from Hydrogenobaculum sp. (strain Y04AAS1).